The sequence spans 164 residues: CASP-like protein 1C1 (164 aa).

The Cytoplasmic portion of the chain corresponds to 1 to 7 (MVKLTKR). A helical transmembrane segment spans residues 8–28 (IGGLVLRLAAFGAALAALIVM). Over 29 to 51 (ITSRERASFLAISLEAKYTDMAA) the chain is Extracellular. Residues 52-72 (FKYFVIANAVVSVYSFLVLFL) form a helical membrane-spanning segment. Residues 73–80 (PKESLLWK) lie on the Cytoplasmic side of the membrane. The helical transmembrane segment at 81-101 (FVVVLDLVMTMLLTSSLSAAL) threads the bilayer. Topologically, residues 102–129 (AVAQVGKKGNANAGWLPICGQVPKFCDQ) are extracellular. The helical transmembrane segment at 130 to 150 (ITGALIAGFVALVLYVLLLLY) threads the bilayer. Topologically, residues 151–164 (SLHAVVDPFLLQKS) are cytoplasmic.

It belongs to the Casparian strip membrane proteins (CASP) family. Homodimer and heterodimers. As to expression, expressed in the stele of the root.

The protein resides in the cell membrane. The protein is CASP-like protein 1C1 of Arabidopsis thaliana (Mouse-ear cress).